A 678-amino-acid chain; its full sequence is DNA ligase (678 aa).

Residues 47-51, 96-97, and E122 each bind NAD(+); these read DSDYD and SL. K124 (N6-AMP-lysine intermediate) is an active-site residue. NAD(+) is bound by residues R145, E182, K300, and K324. Residues C418, C421, C436, and C442 each contribute to the Zn(2+) site. In terms of domain architecture, BRCT spans 602–678; sequence AHNESFTNKT…IFEEDLQNLL (77 aa).

The protein belongs to the NAD-dependent DNA ligase family. LigA subfamily. Requires Mg(2+) as cofactor. The cofactor is Mn(2+).

The enzyme catalyses NAD(+) + (deoxyribonucleotide)n-3'-hydroxyl + 5'-phospho-(deoxyribonucleotide)m = (deoxyribonucleotide)n+m + AMP + beta-nicotinamide D-nucleotide.. In terms of biological role, DNA ligase that catalyzes the formation of phosphodiester linkages between 5'-phosphoryl and 3'-hydroxyl groups in double-stranded DNA using NAD as a coenzyme and as the energy source for the reaction. It is essential for DNA replication and repair of damaged DNA. In Francisella philomiragia subsp. philomiragia (strain ATCC 25017 / CCUG 19701 / FSC 153 / O#319-036), this protein is DNA ligase.